Reading from the N-terminus, the 264-residue chain is 3-methyl-2-oxobutanoate hydroxymethyltransferase (264 aa).

The Mg(2+) site is built by D43 and D82. Residues 43-44 (DS), D82, and K111 each bind 3-methyl-2-oxobutanoate. E113 lines the Mg(2+) pocket. E180 (proton acceptor) is an active-site residue.

The protein belongs to the PanB family. As to quaternary structure, homodecamer; pentamer of dimers. It depends on Mg(2+) as a cofactor.

Its subcellular location is the cytoplasm. The catalysed reaction is 3-methyl-2-oxobutanoate + (6R)-5,10-methylene-5,6,7,8-tetrahydrofolate + H2O = 2-dehydropantoate + (6S)-5,6,7,8-tetrahydrofolate. Its pathway is cofactor biosynthesis; (R)-pantothenate biosynthesis; (R)-pantoate from 3-methyl-2-oxobutanoate: step 1/2. Catalyzes the reversible reaction in which hydroxymethyl group from 5,10-methylenetetrahydrofolate is transferred onto alpha-ketoisovalerate to form ketopantoate. The protein is 3-methyl-2-oxobutanoate hydroxymethyltransferase of Campylobacter fetus subsp. fetus (strain 82-40).